The sequence spans 331 residues: ADP-L-glycero-D-manno-heptose-6-epimerase (331 aa).

Residues 11–12 (FI), 32–33 (DN), Lys39, Lys54, 75–79 (EGACS), and Asn92 contribute to the NADP(+) site. The active-site Proton acceptor is Tyr139. Lys143 provides a ligand contact to NADP(+). Substrate is bound at residue Asn168. 2 residues coordinate NADP(+): Val169 and Lys177. Lys177 acts as the Proton acceptor in catalysis. Substrate contacts are provided by residues Arg179, His186, 200-203 (FGEY), Arg213, and Tyr292.

The protein belongs to the NAD(P)-dependent epimerase/dehydratase family. HldD subfamily. In terms of assembly, homopentamer. The cofactor is NADP(+).

The enzyme catalyses ADP-D-glycero-beta-D-manno-heptose = ADP-L-glycero-beta-D-manno-heptose. The protein operates within nucleotide-sugar biosynthesis; ADP-L-glycero-beta-D-manno-heptose biosynthesis; ADP-L-glycero-beta-D-manno-heptose from D-glycero-beta-D-manno-heptose 7-phosphate: step 4/4. Functionally, catalyzes the interconversion between ADP-D-glycero-beta-D-manno-heptose and ADP-L-glycero-beta-D-manno-heptose via an epimerization at carbon 6 of the heptose. The protein is ADP-L-glycero-D-manno-heptose-6-epimerase of Cupriavidus necator (strain ATCC 17699 / DSM 428 / KCTC 22496 / NCIMB 10442 / H16 / Stanier 337) (Ralstonia eutropha).